The sequence spans 203 residues: Dephospho-CoA kinase (203 aa).

The 198-residue stretch at 6 to 203 (KVAITGGLSC…ELYQELKIYI (198 aa)) folds into the DPCK domain. 14–19 (SCGKSS) is an ATP binding site.

Belongs to the CoaE family.

Its subcellular location is the cytoplasm. It catalyses the reaction 3'-dephospho-CoA + ATP = ADP + CoA + H(+). Its pathway is cofactor biosynthesis; coenzyme A biosynthesis; CoA from (R)-pantothenate: step 5/5. Its function is as follows. Catalyzes the phosphorylation of the 3'-hydroxyl group of dephosphocoenzyme A to form coenzyme A. This chain is Dephospho-CoA kinase, found in Protochlamydia amoebophila (strain UWE25).